A 482-amino-acid polypeptide reads, in one-letter code: tRNA sulfurtransferase (482 aa).

Residues 61–165 enclose the THUMP domain; sequence PAIRDALTRI…NDRLLLVKGR (105 aa). ATP is bound by residues 183–184, lysine 265, glycine 287, and glutamine 296; that span reads LI. Residues cysteine 344 and cysteine 456 are joined by a disulfide bond. The Rhodanese domain maps to 404–482; sequence FGANDAILDI…GFSNVKVYRP (79 aa). Cysteine 456 functions as the Cysteine persulfide intermediate in the catalytic mechanism.

This sequence belongs to the ThiI family.

The protein localises to the cytoplasm. It catalyses the reaction [ThiI sulfur-carrier protein]-S-sulfanyl-L-cysteine + a uridine in tRNA + 2 reduced [2Fe-2S]-[ferredoxin] + ATP + H(+) = [ThiI sulfur-carrier protein]-L-cysteine + a 4-thiouridine in tRNA + 2 oxidized [2Fe-2S]-[ferredoxin] + AMP + diphosphate. It carries out the reaction [ThiS sulfur-carrier protein]-C-terminal Gly-Gly-AMP + S-sulfanyl-L-cysteinyl-[cysteine desulfurase] + AH2 = [ThiS sulfur-carrier protein]-C-terminal-Gly-aminoethanethioate + L-cysteinyl-[cysteine desulfurase] + A + AMP + 2 H(+). It participates in cofactor biosynthesis; thiamine diphosphate biosynthesis. Functionally, catalyzes the ATP-dependent transfer of a sulfur to tRNA to produce 4-thiouridine in position 8 of tRNAs, which functions as a near-UV photosensor. Also catalyzes the transfer of sulfur to the sulfur carrier protein ThiS, forming ThiS-thiocarboxylate. This is a step in the synthesis of thiazole, in the thiamine biosynthesis pathway. The sulfur is donated as persulfide by IscS. This chain is tRNA sulfurtransferase, found in Klebsiella pneumoniae (strain 342).